A 95-amino-acid polypeptide reads, in one-letter code: Protein IDA-LIKE 2 (95 aa).

The signal sequence occupies residues 1–35; that stretch reads MSSRNQRSRITSSFFVSFFTRTILLLLILLLGFCN. The disordered stretch occupies residues 75–95; sequence ASGPSRKHNDIGLLSWHRSSP.

In terms of tissue distribution, expressed in leaves, buds, flowers, seedlings and seeds. Detected at the base of pedicel, in the floral and funicule abscission zones and in vascular tissues.

It localises to the secreted. Its subcellular location is the extracellular space. May be involved in floral abscission. The protein is Protein IDA-LIKE 2 (IDL2) of Arabidopsis thaliana (Mouse-ear cress).